A 294-amino-acid polypeptide reads, in one-letter code: Tryptophan 2,3-dioxygenase 1 (294 aa).

The segment at 1–20 (MSEPIQPTRPAASGCPMHGA) is disordered. Residues 63 to 67 (FIVQH), Tyr125, and Arg129 each bind substrate. His252 serves as a coordination point for heme. A substrate-binding site is contributed by Thr266.

The protein belongs to the tryptophan 2,3-dioxygenase family. In terms of assembly, homotetramer. It depends on heme as a cofactor.

It catalyses the reaction L-tryptophan + O2 = N-formyl-L-kynurenine. Its pathway is amino-acid degradation; L-tryptophan degradation via kynurenine pathway; L-kynurenine from L-tryptophan: step 1/2. Heme-dependent dioxygenase that catalyzes the oxidative cleavage of the L-tryptophan (L-Trp) pyrrole ring and converts L-tryptophan to N-formyl-L-kynurenine. Catalyzes the oxidative cleavage of the indole moiety. This chain is Tryptophan 2,3-dioxygenase 1, found in Ralstonia nicotianae (strain ATCC BAA-1114 / GMI1000) (Ralstonia solanacearum).